Consider the following 291-residue polypeptide: m-AAA protease-interacting protein 1, mitochondrial (291 aa).

Residues 1-96 (MALAARLLPL…SLPASPSRSY (96 aa)) constitute a mitochondrion transit peptide.

In terms of assembly, interacts with AFG3L2. Interacts with SPG7. Interacts with SMDT1/EMRE (via the N-terminal transit peptide); interaction is direct and takes place before maturation of SMDT1/EMRE.

It localises to the mitochondrion matrix. In terms of biological role, promotes sorting of SMDT1/EMRE in mitochondria by ensuring its maturation. Interacts with the transit peptide region of SMDT1/EMRE precursor protein in the mitochondrial matrix, leading to protect it against protein degradation by YME1L1, thereby ensuring SMDT1/EMRE maturation by the mitochondrial processing peptidase (PMPCA and PMPCB). The polypeptide is m-AAA protease-interacting protein 1, mitochondrial (Mus musculus (Mouse)).